Reading from the N-terminus, the 98-residue chain is NADH-ubiquinone oxidoreductase chain 4L (98 aa).

Helical transmembrane passes span 1–21, 29–49, and 61–81; these read MSLIHINILMAFTMSLVGLLM, ALLCLEGMVLSLFILMTLTIL, and IILLVFAACEAAIGLALLVMV.

It belongs to the complex I subunit 4L family. As to quaternary structure, core subunit of respiratory chain NADH dehydrogenase (Complex I) which is composed of 45 different subunits.

The protein resides in the mitochondrion inner membrane. It catalyses the reaction a ubiquinone + NADH + 5 H(+)(in) = a ubiquinol + NAD(+) + 4 H(+)(out). Functionally, core subunit of the mitochondrial membrane respiratory chain NADH dehydrogenase (Complex I) which catalyzes electron transfer from NADH through the respiratory chain, using ubiquinone as an electron acceptor. Part of the enzyme membrane arm which is embedded in the lipid bilayer and involved in proton translocation. This Phocoena phocoena (Harbor porpoise) protein is NADH-ubiquinone oxidoreductase chain 4L (MT-ND4L).